Consider the following 260-residue polypeptide: 14-3-3-like protein (260 aa).

The segment at 240-260 is disordered; the sequence is DMQDDGGDEIKEAAPKPDEQY. A compositionally biased stretch (basic and acidic residues) spans 247 to 260; sequence DEIKEAAPKPDEQY.

This sequence belongs to the 14-3-3 family.

This chain is 14-3-3-like protein, found in Oenothera elata subsp. hookeri (Hooker's evening primrose).